The primary structure comprises 321 residues: Lipoyl synthase (321 aa).

7 residues coordinate [4Fe-4S] cluster: C68, C73, C79, C94, C98, C101, and S308. Residues 80-297 (FNHGTATFMI…KAEALAMGFT (218 aa)) form the Radical SAM core domain.

This sequence belongs to the radical SAM superfamily. Lipoyl synthase family. [4Fe-4S] cluster serves as cofactor.

The protein localises to the cytoplasm. The catalysed reaction is [[Fe-S] cluster scaffold protein carrying a second [4Fe-4S](2+) cluster] + N(6)-octanoyl-L-lysyl-[protein] + 2 oxidized [2Fe-2S]-[ferredoxin] + 2 S-adenosyl-L-methionine + 4 H(+) = [[Fe-S] cluster scaffold protein] + N(6)-[(R)-dihydrolipoyl]-L-lysyl-[protein] + 4 Fe(3+) + 2 hydrogen sulfide + 2 5'-deoxyadenosine + 2 L-methionine + 2 reduced [2Fe-2S]-[ferredoxin]. It functions in the pathway protein modification; protein lipoylation via endogenous pathway; protein N(6)-(lipoyl)lysine from octanoyl-[acyl-carrier-protein]: step 2/2. In terms of biological role, catalyzes the radical-mediated insertion of two sulfur atoms into the C-6 and C-8 positions of the octanoyl moiety bound to the lipoyl domains of lipoate-dependent enzymes, thereby converting the octanoylated domains into lipoylated derivatives. In Escherichia coli O9:H4 (strain HS), this protein is Lipoyl synthase.